Reading from the N-terminus, the 120-residue chain is Large ribosomal subunit protein bL12 (120 aa).

Belongs to the bacterial ribosomal protein bL12 family. In terms of assembly, homodimer. Part of the ribosomal stalk of the 50S ribosomal subunit. Forms a multimeric L10(L12)X complex, where L10 forms an elongated spine to which 2 to 4 L12 dimers bind in a sequential fashion. Binds GTP-bound translation factors.

In terms of biological role, forms part of the ribosomal stalk which helps the ribosome interact with GTP-bound translation factors. Is thus essential for accurate translation. The chain is Large ribosomal subunit protein bL12 from Listeria monocytogenes serotype 4b (strain CLIP80459).